The following is a 163-amino-acid chain: Peptidyl-prolyl cis-trans isomerase NIMA-interacting 1 (163 aa).

The WW domain occupies 5 to 39 (EKLPPGWEKRMSRSSGRVYYFNHITNASQWERPSG). The disordered stretch occupies residues 33 to 54 (QWERPSGNSSSGGKNGQGEPAR). Ser43 carries the post-translational modification Phosphoserine. Residue Lys46 is modified to N6-acetyllysine. A PpiC domain is found at 52–163 (PARVRCSHLL…SGIHIILRTE (112 aa)). Ser71 bears the Phosphoserine; by DAPK1 mark. Position 108 is a phosphoserine (Ser108).

As to quaternary structure, interacts with STIL. Interacts with KIF20B. Interacts with NEK6. Interacts (via WW domain) with PRKX. Interacts with BTK. Interacts (via PpiC domain) with DAPK1. Interacts with the phosphorylated form of RAF1. Interacts (via WW domain) with ATCAY; upon NGF stimulation. Interacts with PML (isoform PML-4). Interacts with BCL6. Interacts with FBXW7, disrupting FBXW7 dimerization and promoting FBXW7 autoubiquitination and degradation. Directly interacts with RBBP8/CtIP; this interaction depends upon RBBP8 phosphorylation. Interacts (via WW domain) with IRAK3/IRAK-M (when phosphorylated at 'Ser-110') in response to IL33-mediated (but not TLR4 ligand LPS) dendritic cell stimulation. Interacts with PGK1 (when phosphorylated at 'Ser-203'); the interaction is direct, occurs under hypoxic conditions, and targets PGK1 to the mitochondrion by promoting interactions with the TOM complex. Post-translationally, phosphorylation at Ser-71 by DAPK1 results in inhibition of its catalytic activity, nuclear localization, and its ability to induce centrosome amplification, chromosome instability and cell transformation. Ser-71 is dephosphorylated upon IL33-stimulation of dendritic cells. Expressed in immune cells in the lung (at protein level). The phosphorylated form at Ser-71 is expressed in normal breast tissue cells but not in breast cancer cells.

It localises to the nucleus. The protein localises to the nucleus speckle. Its subcellular location is the cytoplasm. It carries out the reaction [protein]-peptidylproline (omega=180) = [protein]-peptidylproline (omega=0). Functionally, peptidyl-prolyl cis/trans isomerase (PPIase) that binds to and isomerizes specific phosphorylated Ser/Thr-Pro (pSer/Thr-Pro) motifs. By inducing conformational changes in a subset of phosphorylated proteins, acts as a molecular switch in multiple cellular processes. Displays a preference for acidic residues located N-terminally to the proline bond to be isomerized. Regulates mitosis presumably by interacting with NIMA and attenuating its mitosis-promoting activity. Down-regulates kinase activity of BTK. Can transactivate multiple oncogenes and induce centrosome amplification, chromosome instability and cell transformation. Required for the efficient dephosphorylation and recycling of RAF1 after mitogen activation. Binds and targets PML and BCL6 for degradation in a phosphorylation-dependent manner. Acts as a regulator of JNK cascade by binding to phosphorylated FBXW7, disrupting FBXW7 dimerization and promoting FBXW7 autoubiquitination and degradation: degradation of FBXW7 leads to subsequent stabilization of JUN. May facilitate the ubiquitination and proteasomal degradation of RBBP8/CtIP through CUL3/KLHL15 E3 ubiquitin-protein ligase complex, hence favors DNA double-strand repair through error-prone non-homologous end joining (NHEJ) over error-free, RBBP8-mediated homologous recombination (HR). Upon IL33-induced lung inflammation, catalyzes cis-trans isomerization of phosphorylated IRAK3/IRAK-M, inducing IRAK3 stabilization, nuclear translocation and expression of pro-inflammatory genes in dendritic cells. Catalyzes cis-trans isomerization of phosphorylated phosphoglycerate kinase PGK1 under hypoxic conditions to promote its binding to the TOM complex and targeting to the mitochondrion. This chain is Peptidyl-prolyl cis-trans isomerase NIMA-interacting 1 (PIN1), found in Homo sapiens (Human).